The primary structure comprises 138 residues: uncharacterized protein (138 aa).

35 to 42 contributes to the ATP binding site; sequence DFIGSFYN.

This is an uncharacterized protein from Acanthamoeba polyphaga mimivirus (APMV).